We begin with the raw amino-acid sequence, 585 residues long: MSATSVDQRPKGQGNKVSVQNGSIHQKDAVNDDDFEPYLSSQTNQNNSYPPMSDPYMPSYYAPSIGFPYSLGEAAWSTAGDQPMPYLTTYGQMSNGEHHYIPDGVFSQPGALGNTPPFLGQHGFNFFPGNADFSTWGTSGSQGQSTQNSAYSSSYGYPPSSLGRAITDGQAGFGNDTLSKVPGISSIEQGMTGLKIGGDLTAAVTKTVGTALSSSGMTSIATNNVPPVSSAAPKPTSWAAIARKPAKPQPKLKPKGNVGIGGSAVPPPPIKHNMNIGTWDEKGSVVKAPPTQPVLPPQTIIQQPQPLIQPPPLVQSQLPQQQPQPPQPQQQQGPQPQAQPHQVQSQQPQLQNRWVAPRNRGTGFNQNNGTGSENFGLGVVPVSASPSSVEVHPVLEKLKAINNYNPKDFDWNLKNGRVFIIKSYSEDDIHRSIKYSIWCSTEHGNKRLDAAYRSLNGKGPLYLLFSVNGSGHFCGVAEMKSVVDYNAYAGVWSQDKWKGKFEVKWIFVKDVPNNQLRHIRLENNDNKPVTNSRDTQEVPLEKAKQVLKIIATFKHTTSIFDDFAHYEKRQEEEEAMRRERNRNKQ.

Disordered regions lie at residues 1 to 51 (MSAT…SYPP), 244 to 277 (KPAK…MNIG), and 304 to 350 (PQPL…QPQL). Ser-2 carries the post-translational modification N-acetylserine. The span at 15–24 (NKVSVQNGSI) shows a compositional bias: polar residues. Ser-23 is modified (phosphoserine). The span at 244–254 (KPAKPQPKLKP) shows a compositional bias: basic residues. Residues 329–350 (QQQQGPQPQAQPHQVQSQQPQL) are compositionally biased toward low complexity. One can recognise a YTH domain in the interval 416–550 (GRVFIIKSYS…EKAKQVLKII (135 aa)). Residues 422 to 424 (KSY), Asp-428, 438 to 439 (WC), Asn-468, Trp-492, and Trp-497 contribute to the RNA site.

It belongs to the YTHDF family. YTHDF3 subfamily. In terms of assembly, interacts with CNOT1; promoting recruitment of the CCR4-NOT complex. Interacts with YTHDF1. Interacts with YTHDF2. Interacts with PAN3.

It localises to the cytoplasm. Its subcellular location is the cytosol. The protein localises to the P-body. It is found in the stress granule. Specifically recognizes and binds N6-methyladenosine (m6A)-containing RNAs, and regulates their stability. M6A is a modification present at internal sites of mRNAs and some non-coding RNAs and plays a role in mRNA stability and processing. Acts as a regulator of mRNA stability by promoting degradation of m6A-containing mRNAs via interaction with the CCR4-NOT complex or PAN3. The YTHDF paralogs (YTHDF1, YTHDF2 and YTHDF3) share m6A-containing mRNAs targets and act redundantly to mediate mRNA degradation and cellular differentiation. Acts as a negative regulator of type I interferon response by down-regulating interferon-stimulated genes (ISGs) expression: acts by binding to FOXO3 mRNAs. Binds to FOXO3 mRNAs independently of METTL3-mediated m6A modification. Can also act as a regulator of mRNA stability in cooperation with YTHDF2 by binding to m6A-containing mRNA and promoting their degradation. Recognizes and binds m6A-containing circular RNAs (circRNAs); circRNAs are generated through back-splicing of pre-mRNAs, a non-canonical splicing process promoted by dsRNA structures across circularizing exons. Promotes formation of phase-separated membraneless compartments, such as P-bodies or stress granules, by undergoing liquid-liquid phase separation upon binding to mRNAs containing multiple m6A-modified residues: polymethylated mRNAs act as a multivalent scaffold for the binding of YTHDF proteins, juxtaposing their disordered regions and thereby leading to phase separation. The resulting mRNA-YTHDF complexes then partition into different endogenous phase-separated membraneless compartments, such as P-bodies, stress granules or neuronal RNA granules. May also recognize and bind N1-methyladenosine (m1A)-containing mRNAs: inhibits trophoblast invasion by binding to m1A-methylated transcripts of IGF1R, promoting their degradation. The sequence is that of YTH domain-containing family protein 3 from Mus musculus (Mouse).